Consider the following 479-residue polypeptide: Probable phosphatidate cytidylyltransferase (479 aa).

The segment covering 1-28 (MRTDNIRNRKEQLKKQEKKDFDSSKDEE) has biased composition (basic and acidic residues). The interval 1-71 (MRTDNIRNRK…NNNNNNNNIK (71 aa)) is disordered. The Cytoplasmic portion of the chain corresponds to 1 to 108 (MRTDNIRNRK…LAIRSVMGAF (108 aa)). The segment covering 53 to 69 (NKNIINQKTNNNNNNNN) has biased composition (low complexity). Residues 109-129 (MIGFFTIVLSTDHFIVALFVI) traverse the membrane as a helical segment. Over 130–159 (ALQLLVFKEMIALRYIEAKEKKIPHFRTLN) the chain is Extracellular. Residues 160–180 (WFFLFTSFFFFYAKPILITLA) traverse the membrane as a helical segment. Residues 181–192 (NYYPDIFQHFVR) are Cytoplasmic-facing. Residues 193–213 (YHLWHSFSLYCIGFVLFILTL) traverse the membrane as a helical segment. Topologically, residues 214–240 (RKGVYRYQFSQLTWTLMILMMVVVQSN) are extracellular. The helical transmembrane segment at 241–261 (FLISNIYQGLIWFILPVSIIV) threads the bilayer. The Cytoplasmic portion of the chain corresponds to 262–293 (CNDIFAYFNGFFLGKKFINRPLMKISPNKTWE). Residues 294-314 (GFIGATGWTLLFAYYFCGFLL) traverse the membrane as a helical segment. Residues 315–375 (KYDWIVCPKG…FTYIPIQFHA (61 aa)) are Extracellular-facing. The chain crosses the membrane as a helical span at residues 376-396 (LVLALFGSLIAPFGGFFASGI). Residues 397–479 (KRAYKVKDFD…IEFTTGTITA (83 aa)) lie on the Cytoplasmic side of the membrane.

Belongs to the CDS family.

The protein localises to the membrane. It catalyses the reaction a 1,2-diacyl-sn-glycero-3-phosphate + CTP + H(+) = a CDP-1,2-diacyl-sn-glycerol + diphosphate. The protein operates within phospholipid metabolism; CDP-diacylglycerol biosynthesis; CDP-diacylglycerol from sn-glycerol 3-phosphate: step 3/3. This Dictyostelium discoideum (Social amoeba) protein is Probable phosphatidate cytidylyltransferase (cdsA).